A 434-amino-acid chain; its full sequence is Sodium/bile acid cotransporter 5 (434 aa).

The signal sequence occupies residues 1–18 (MSGKLFIILLLLVTPGEA). The Extracellular segment spans residues 19 to 129 (RKSFLRFLNI…VSVFRQTEDS (111 aa)). 2 N-linked (GlcNAc...) asparagine glycosylation sites follow: Asn-73 and Asn-96. The helical transmembrane segment at 130–150 (LFQEPIHVNSSVFLLVLLMIL) threads the bilayer. The Cytoplasmic portion of the chain corresponds to 151–172 (LNKCAFGCKIELQVLQTVWKRP). Residues 173-193 (LPILLGAVTQFFLMPFCGFLL) form a helical membrane-spanning segment. Residues 194–195 (SQ) are Extracellular-facing. Residues 196–216 (ILGLSKAQAFGFVMTCTCPGG) traverse the membrane as a helical segment. Over 217-232 (GGGYLFALLLEGDVTL) the chain is Cytoplasmic. The chain crosses the membrane as a helical span at residues 233–255 (AILMACTSTSLALIMMPVNSYLY). The Extracellular segment spans residues 256–268 (SCLLGLAGVFHVP). A helical transmembrane segment spans residues 269-289 (VLKIVSTLLFILTPVSIGIVI). The Cytoplasmic segment spans residues 290–306 (KHRMPKKAVCLERVVQP). A helical membrane pass occupies residues 307–327 (LSLTLMLVGVYLAFRMGLVFL). At 328-331 (RMAN) the chain is on the extracellular side. The chain crosses the membrane as a helical span at residues 332 to 352 (LEVFLLGLLVPVLGFSFGYSF). Residues 353–365 (AKVYLLPLPVCKT) are Cytoplasmic-facing. The helical transmembrane segment at 366–386 (VAIESGMLNSFLALAIIQLSF) threads the bilayer. Topologically, residues 387-395 (PQSKAYEAS) are extracellular. Residues 396–416 (VAPFTVAMCSSCEMLLLLLVY) form a helical membrane-spanning segment. Over 417 to 434 (KAKKRPLLSTENEKAPLV) the chain is Cytoplasmic.

It belongs to the bile acid:sodium symporter (BASS) (TC 2.A.28) family.

The protein localises to the membrane. The sequence is that of Sodium/bile acid cotransporter 5 (Slc10a5) from Rattus norvegicus (Rat).